The primary structure comprises 402 residues: Phosphoglycerate kinase (402 aa).

Substrate-binding positions include 24–26, Arg40, 63–66, Arg122, and Arg155; these read DFN and HFGR. Residues Lys206, Gly297, Glu328, and 357 to 360 each bind ATP; that span reads GGDS.

Belongs to the phosphoglycerate kinase family. In terms of assembly, monomer.

The protein localises to the cytoplasm. The catalysed reaction is (2R)-3-phosphoglycerate + ATP = (2R)-3-phospho-glyceroyl phosphate + ADP. It participates in carbohydrate degradation; glycolysis; pyruvate from D-glyceraldehyde 3-phosphate: step 2/5. This Synechococcus sp. (strain CC9311) protein is Phosphoglycerate kinase.